We begin with the raw amino-acid sequence, 521 residues long: GMP synthase [glutamine-hydrolyzing] (521 aa).

The 193-residue stretch at 5–197 (KILILDFGSQ…VLDICGAQPG (193 aa)) folds into the Glutamine amidotransferase type-1 domain. The Nucleophile role is filled by cysteine 81. Residues histidine 171 and glutamate 173 contribute to the active site. In terms of domain architecture, GMPS ATP-PPase spans 198–390 (WTMPNYIEEA…LGLPREMVYR (193 aa)). 225–231 (SGGVDSS) contacts ATP.

Homodimer.

It catalyses the reaction XMP + L-glutamine + ATP + H2O = GMP + L-glutamate + AMP + diphosphate + 2 H(+). It participates in purine metabolism; GMP biosynthesis; GMP from XMP (L-Gln route): step 1/1. Its function is as follows. Catalyzes the synthesis of GMP from XMP. This Neisseria gonorrhoeae (strain NCCP11945) protein is GMP synthase [glutamine-hydrolyzing].